A 1674-amino-acid chain; its full sequence is Kinesin-like protein KIF21A (1674 aa).

M1 is subject to N-acetylmethionine. The Kinesin motor domain maps to 9-371 (SVRVAVRIRP…LKYANRARNI (363 aa)). An ATP-binding site is contributed by 88–95 (GQTGAGKT). Positions 365–575 (ANRARNIKNK…NREERSVAGK (211 aa)) form a coiled coil. At S524 the chain carries Phosphoserine. Disordered regions lie at residues 556–641 (KKRL…DEKA), 779–804 (EEQE…DQRK), and 841–881 (SDKV…AQQK). Residues 560–597 (QKLEESNREERSVAGKEDNTDTDQEKKEEKGVSERENN) are compositionally biased toward basic and acidic residues. The segment covering 598–637 (ELEVEESQEVSDHEDEEEEEEEEEDDIDGGESSDESDSES) has biased composition (acidic residues). The span at 851–865 (KLSSSDAPAQDTGSS) shows a compositional bias: polar residues. 2 coiled-coil regions span residues 931–1019 (TDII…AKEE) and 1053–1083 (LQAA…NQLL). The segment at 1116-1138 (VEDSTDEDAPLNSPGSEGSTLSS) is disordered. Polar residues predominate over residues 1128-1138 (SPGSEGSTLSS). Residues 1146–1167 (EVKPKNKARRRTTTQMELLYAD) are interaction with KANK1 and KANK2. 2 stretches are compositionally biased toward polar residues: residues 1170–1179 (ELASDTSTGD) and 1196–1205 (GMNTETSGTS). Residues 1170–1318 (ELASDTSTGD…SSLSEVHRSS (149 aa)) are disordered. 4 positions are modified to phosphoserine: S1212, S1225, S1229, and S1239. Positions 1245-1262 (KAYEKAEKSKAKEQKHSD) are enriched in basic and acidic residues. Residues 1288-1297 (NRLTVSQGNT) show a composition bias toward polar residues. 7 WD repeats span residues 1345–1382 (GHTK…EIMS), 1385–1423 (GHPN…KCIR), 1449–1487 (SGEN…STGK), 1490–1532 (GHLG…LGTV), 1541–1578 (PHYD…LLQQ), 1582–1621 (AHKD…PVGE), and 1624–1661 (GHDS…DGQI). Phosphoserine is present on S1662. Residue T1664 is modified to Phosphothreonine. S1673 carries the phosphoserine modification.

This sequence belongs to the TRAFAC class myosin-kinesin ATPase superfamily. Kinesin family. As to quaternary structure, part of a cortical microtubule stabilization complex (CMSC) composed of KANK1, PPFIA1, PPFIBP1, ERC1/ELKS, PHLDB2/LL5beta, CLASPs, KIF21A and possibly additional interactors; within CMSCs KANK1 and PHLDB2/LL5beta seem to be the core components for recruiting microtubule-binding proteins KIF21A and CLASPs, whereas PPFIA1, PPFIBP1 and ERC1/ELKS serve as scaffolds for protein clustering. Interacts (via residues 1146-1167) with KANK1 (via ankyrin repeats 1-5) and KANK2 (via ankyrin repeats 1-5).

The protein localises to the cytoplasm. It is found in the cytoskeleton. The protein resides in the cell cortex. It localises to the cell projection. Its subcellular location is the axon. The protein localises to the dendrite. It is found in the growth cone. Its function is as follows. Processive microtubule plus-end directed motor protein involved in neuronal axon guidance. Is recruited by KANK1 to cortical microtubule stabilizing complexes (CMSCs) at focal adhesions (FAs) rims where it promotes microtubule capture and stability. Controls microtubule polymerization rate at axonal growth cones and suppresses microtubule growth without inducing microtubule disassembly once it reaches the cell cortex. The sequence is that of Kinesin-like protein KIF21A (KIF21A) from Homo sapiens (Human).